The following is a 534-amino-acid chain: Glucans biosynthesis protein D (534 aa).

Positions 1 to 26 (MQRRDFIRNASLALAAFGLPSLPACA) form a signal peptide, tat-type signal.

This sequence belongs to the OpgD/OpgG family. Post-translationally, predicted to be exported by the Tat system. The position of the signal peptide cleavage has not been experimentally proven.

The protein resides in the periplasm. The protein operates within glycan metabolism; osmoregulated periplasmic glucan (OPG) biosynthesis. In terms of biological role, probably involved in the control of the structural glucose backbone of osmoregulated periplasmic glucans (OPGs). The sequence is that of Glucans biosynthesis protein D from Stenotrophomonas maltophilia (strain R551-3).